A 207-amino-acid chain; its full sequence is Ion-translocating oxidoreductase complex subunit G (207 aa).

A helical membrane pass occupies residues 11–31; sequence GILLGFIALLCTIISTGIFFL. The residue at position 175 (T175) is an FMN phosphoryl threonine.

This sequence belongs to the RnfG family. The complex is composed of six subunits: RnfA, RnfB, RnfC, RnfD, RnfE and RnfG. FMN is required as a cofactor.

The protein resides in the cell inner membrane. Its function is as follows. Part of a membrane-bound complex that couples electron transfer with translocation of ions across the membrane. This is Ion-translocating oxidoreductase complex subunit G from Haemophilus influenzae (strain 86-028NP).